The sequence spans 768 residues: Kelch domain-containing protein 7A (768 aa).

Residues 12–29 (VVLSAAALLLVTVAYRLY) form a helical membrane-spanning segment. The segment at 35–210 (PAQRWGGNAQ…PAPLQGSSDM (176 aa)) is disordered. A Phosphoserine modification is found at Ser-77. The span at 104-118 (TDRKSQRKGSGEERG) shows a compositional bias: basic and acidic residues. The N-linked (GlcNAc...) asparagine glycan is linked to Asn-248. The disordered stretch occupies residues 304–352 (LTEVPSPRPPPRSLGTGAASGGQAGDTKGAAERAASPQPGPSPSTRGFS). One copy of the Kelch 1 repeat lies at 319-365 (TGAASGGQAGDTKGAAERAASPQPGPSPSTRGFSRKESLLQIAENPE). A Phosphoserine modification is found at Ser-356. Residues 371-395 (DGFWLPAPPCPDPGALPGSGRSSQE) form a disordered region. Kelch repeat units follow at residues 483 to 529 (QYLV…ICSL), 532 to 580 (YLFV…ALDG), 581 to 623 (HLYA…ATAC), and 626 to 668 (EIFV…AVNG).

It localises to the membrane. The protein is Kelch domain-containing protein 7A (KLHDC7A) of Pongo abelii (Sumatran orangutan).